Reading from the N-terminus, the 421-residue chain is MDKLIITGGARLDGEIRISGAKNAALPILAATLLADGPVTVGNLPHLHDITTMIELFGRMGIEPVIDEKLSVEIDPRTIKTLVAPYELVKTMRASILVLGPMVARFGEAEVALPGGCAIGSRPVDLHIRGLEAMGAKIEVEGGYIKAKAPEGGLRGAHFFFDTVSVTGTENIMMAAALAKGRSVLQNAAREPEVVDLANFINAMGGNIQGAGTDTITIDGVERLDSANYRVMPDRIETGTYLVAAAVTGGRVKVKDTDPTILEAVLEKLKEAGADINTGEDWIELDMHGKRPKAVNLRTAPYPAFPTDMQAQFISLNAIAEGTGAVIETIFENRFMHVYEMHRMGAQIQVEGNTAIVTGVKALKGAPVMATDLRASASLVLSALVAEGDTLIDRIYHIDRGYECIEEKLQMLGAKIRRVPG.

22 to 23 (KN) is a phosphoenolpyruvate binding site. UDP-N-acetyl-alpha-D-glucosamine is bound at residue Arg-93. Cys-117 functions as the Proton donor in the catalytic mechanism. Cys-117 carries the post-translational modification 2-(S-cysteinyl)pyruvic acid O-phosphothioketal. Residues 122-126 (RPVDL), Asp-308, and Ile-330 contribute to the UDP-N-acetyl-alpha-D-glucosamine site.

It belongs to the EPSP synthase family. MurA subfamily.

Its subcellular location is the cytoplasm. It carries out the reaction phosphoenolpyruvate + UDP-N-acetyl-alpha-D-glucosamine = UDP-N-acetyl-3-O-(1-carboxyvinyl)-alpha-D-glucosamine + phosphate. It participates in cell wall biogenesis; peptidoglycan biosynthesis. In terms of biological role, cell wall formation. Adds enolpyruvyl to UDP-N-acetylglucosamine. The polypeptide is UDP-N-acetylglucosamine 1-carboxyvinyltransferase (Pseudomonas putida (strain ATCC 700007 / DSM 6899 / JCM 31910 / BCRC 17059 / LMG 24140 / F1)).